The sequence spans 96 residues: Large ribosomal subunit protein eL14 (96 aa).

Belongs to the eukaryotic ribosomal protein eL14 family.

The protein is Large ribosomal subunit protein eL14 of Desulfurococcus amylolyticus (strain DSM 18924 / JCM 16383 / VKM B-2413 / 1221n) (Desulfurococcus kamchatkensis).